We begin with the raw amino-acid sequence, 594 residues long: Alanine--tRNA ligase (594 aa).

4 residues coordinate Zn(2+): histidine 456, histidine 460, cysteine 558, and histidine 562.

It belongs to the class-II aminoacyl-tRNA synthetase family. Requires Zn(2+) as cofactor.

Its subcellular location is the cytoplasm. It carries out the reaction tRNA(Ala) + L-alanine + ATP = L-alanyl-tRNA(Ala) + AMP + diphosphate. Functionally, catalyzes the attachment of alanine to tRNA(Ala) in a two-step reaction: alanine is first activated by ATP to form Ala-AMP and then transferred to the acceptor end of tRNA(Ala). Also edits incorrectly charged Ser-tRNA(Ala) and Gly-tRNA(Ala) via its editing domain. The protein is Alanine--tRNA ligase (alaS) of Borreliella burgdorferi (strain ATCC 35210 / DSM 4680 / CIP 102532 / B31) (Borrelia burgdorferi).